Consider the following 72-residue polypeptide: Cell division protein ZapB (72 aa).

Residues 1-72 (MSSEILDQLE…RSLLGQIDNV (72 aa)) adopt a coiled-coil conformation.

This sequence belongs to the ZapB family. As to quaternary structure, homodimer. The ends of the coiled-coil dimer bind to each other, forming polymers. Interacts with FtsZ.

The protein localises to the cytoplasm. In terms of biological role, non-essential, abundant cell division factor that is required for proper Z-ring formation. It is recruited early to the divisome by direct interaction with FtsZ, stimulating Z-ring assembly and thereby promoting cell division earlier in the cell cycle. Its recruitment to the Z-ring requires functional FtsA or ZipA. The chain is Cell division protein ZapB from Actinobacillus succinogenes (strain ATCC 55618 / DSM 22257 / CCUG 43843 / 130Z).